The chain runs to 282 residues: Dihydroorotate dehydrogenase B (NAD(+)), electron transfer subunit homolog (282 aa).

Residues 2–100 (GGTALNEIVK…VGPLGNPSEI (99 aa)) enclose the FAD-binding FR-type domain. Residues Cys225, Cys228, and Cys240 each contribute to the [2Fe-2S] cluster site.

Belongs to the PyrK family. [2Fe-2S] cluster serves as cofactor. Requires FAD as cofactor.

The sequence is that of Dihydroorotate dehydrogenase B (NAD(+)), electron transfer subunit homolog from Thermotoga maritima (strain ATCC 43589 / DSM 3109 / JCM 10099 / NBRC 100826 / MSB8).